Here is a 619-residue protein sequence, read N- to C-terminus: TOX high mobility group box family member 4 (619 aa).

2 disordered regions span residues 153–227 (LGLS…QKPV) and 304–337 (DMDP…PPAL). Thr176 is subject to Phosphothreonine. Phosphoserine occurs at positions 178, 181, and 182. Over residues 183 to 193 (LHEDGVEEFRR) the composition is skewed to basic and acidic residues. The segment covering 208–218 (KQKAPKKRKKK) has biased composition (basic residues). The Nuclear localization signal motif lies at 213 to 218 (KKRKKK). A DNA-binding region (HMG box) is located at residues 223 to 291 (PQKPVSAYAL…EYLKALAAYK (69 aa)). A compositionally biased stretch (pro residues) spans 307 to 319 (PAPPSQTPSPPPV). The residue at position 313 (Thr313) is a Phosphothreonine. Ser315 carries the phosphoserine modification. The segment covering 320-337 (AAADPASPAPASTEPPAL) has biased composition (low complexity). Asymmetric dimethylarginine is present on Arg479. Positions 507-529 (PPPVESSPEQPVNNSPETHTVEE) are disordered. A compositionally biased stretch (low complexity) spans 512–524 (SSPEQPVNNSPET). Phosphoserine is present on residues Ser548, Ser550, Ser558, Ser560, and Ser565.

Component of the PNUTS-PP1 phosphatase complex, composed of PPP1R10/PNUTS, TOX4, WDR82 and PPP1CA or PPP1CB or PPP1CC. Interacts with PPP1R10/PNUTS. Interacts with FOXO1 and CREB1 (increased by cAMP); FOXO1 and CREB1 are required for full induction of TOX4-dependent activity and the interactions are inhibited by insulin.

It is found in the nucleus. It localises to the chromosome. With respect to regulation, in liver, recruited to target gene promoters following treatment with dexamethasone and cAMP. Binding is decreased in presence of insulin. Transcription factor that modulates cell fate reprogramming from the somatic state to the pluripotent and neuronal fate. In liver, controls the expression of hormone-regulated gluconeogenic genes such as G6PC1 and PCK1. This regulation is independent of the insulin receptor activation. Also acts as a regulatory component of protein phosphatase 1 (PP1) complexes. Component of the PNUTS-PP1 protein phosphatase complex, a PP1 complex that regulates RNA polymerase II transcription pause-release. PNUTS-PP1 also plays a role in the control of chromatin structure and cell cycle progression during the transition from mitosis into interphase. This Bos taurus (Bovine) protein is TOX high mobility group box family member 4 (TOX4).